The following is a 147-amino-acid chain: Hemoglobin subunit beta-1 (147 aa).

Position 2 is an N-acetylvaline (Val2). The Globin domain maps to 3-147 (HLTDAEKAAV…VATALAHKYH (145 aa)). Residue Lys18 is modified to N6-succinyllysine. 3 positions are modified to phosphoserine: Ser21, Ser45, and Ser51. Lys60 is subject to N6-succinyllysine. The heme b site is built by His64 and His93. Residue Arg105 is modified to Asymmetric dimethylarginine. Thr124 carries the post-translational modification Phosphothreonine.

Belongs to the globin family. Heterotetramer of two alpha chains and two beta chains. In terms of tissue distribution, red blood cells.

Involved in oxygen transport from the lung to the various peripheral tissues. This chain is Hemoglobin subunit beta-1 (Hbb-b1), found in Mus musculus (Mouse).